The following is a 155-amino-acid chain: MLSLRQSIRFFKPATRTLCSSRYLLQQKPVVKTAQNLAEVNGPETLIGPGAKEGTVPTDLDQETGLARLELLGKLEGIDVFDTKPLDSSRKGTMKDPIIIESYDDYRYVGCTGSPAGSHTIMWLKPTVNEVARCWECGSVYKLNPVGVPNDDHHH.

The N-terminal 25 residues, 1–25 (MLSLRQSIRFFKPATRTLCSSRYLL), are a transit peptide targeting the mitochondrion. Phosphothreonine is present on Thr55. Zn(2+) contacts are provided by Cys111, His119, Cys134, and Cys137.

It belongs to the cytochrome c oxidase subunit 5B family. Component of the cytochrome c oxidase (complex IV, CIV), a multisubunit enzyme composed of 12 subunits. The complex is composed of a catalytic core of 3 subunits COX1, COX2 and COX3, encoded in the mitochondrial DNA, and 9 supernumerary subunits COX4, COX5A (or COX5B), COX6, COX7, COX8, COX9, COX12, COX13 and COX26, which are encoded in the nuclear genome. The complex exists as a monomer or a dimer and forms supercomplexes (SCs) in the inner mitochondrial membrane with a dimer of ubiquinol-cytochrome c oxidoreductase (cytochrome b-c1 complex, complex III, CIII), resulting in 2 different assemblies (supercomplexes III(2)IV and III(2)IV(2)).

It localises to the mitochondrion inner membrane. It participates in energy metabolism; oxidative phosphorylation. Its function is as follows. Component of the cytochrome c oxidase, the last enzyme in the mitochondrial electron transport chain which drives oxidative phosphorylation. The respiratory chain contains 3 multisubunit complexes succinate dehydrogenase (complex II, CII), ubiquinol-cytochrome c oxidoreductase (cytochrome b-c1 complex, complex III, CIII) and cytochrome c oxidase (complex IV, CIV), that cooperate to transfer electrons derived from NADH and succinate to molecular oxygen, creating an electrochemical gradient over the inner membrane that drives transmembrane transport and the ATP synthase. Cytochrome c oxidase is the component of the respiratory chain that catalyzes the reduction of oxygen to water. Electrons originating from reduced cytochrome c in the intermembrane space (IMS) are transferred via the dinuclear copper A center (CU(A)) of COX2 and heme A of COX1 to the active site in COX1, a binuclear center (BNC) formed by heme A3 and copper B (CU(B)). The BNC reduces molecular oxygen to 2 water molecules using 4 electrons from cytochrome c in the IMS and 4 protons from the mitochondrial matrix. This chain is Cytochrome c oxidase subunit 4, mitochondrial (COX4), found in Saccharomyces cerevisiae (strain ATCC 204508 / S288c) (Baker's yeast).